Reading from the N-terminus, the 166-residue chain is Large ribosomal subunit protein uL10 (166 aa).

It belongs to the universal ribosomal protein uL10 family. In terms of assembly, part of the ribosomal stalk of the 50S ribosomal subunit. The N-terminus interacts with L11 and the large rRNA to form the base of the stalk. The C-terminus forms an elongated spine to which L12 dimers bind in a sequential fashion forming a multimeric L10(L12)X complex.

Forms part of the ribosomal stalk, playing a central role in the interaction of the ribosome with GTP-bound translation factors. The chain is Large ribosomal subunit protein uL10 from Hydrogenovibrio crunogenus (strain DSM 25203 / XCL-2) (Thiomicrospira crunogena).